Here is a 589-residue protein sequence, read N- to C-terminus: Proton pump-interactor 2 (589 aa).

Residues 205–245 are a coiled coil; it reads EDSLAEKEASINRVKSMAVELNEVKKELDAITWKINHLSDK. 4 stretches are compositionally biased toward basic and acidic residues: residues 370-383, 395-408, 426-450, and 504-534; these read KGGEKVHETNREDS, TDKRKKETRKKAMD, VYEKPKKEEEEVDEETLKEREREEQ, and ESDHSQEVTKDLEKVRTLAVSGKEKHQKERS. Disordered regions lie at residues 370 to 450 and 485 to 534; these read KGGE…REEQ and KECE…KERS. Residues 431–500 are a coiled coil; the sequence is KKEEEEVDEE…AKKKAAANSS (70 aa). A helical transmembrane segment spans residues 568 to 588; it reads WVWGLSSAALAVALFLVVLLL.

It belongs to the plant Proton pump-interactor protein family. Expressed in seedlings and flowers.

It is found in the cell membrane. Its subcellular location is the endoplasmic reticulum membrane. Functionally, may regulate plasma membrane ATPase activity. The protein is Proton pump-interactor 2 (PPI2) of Arabidopsis thaliana (Mouse-ear cress).